Reading from the N-terminus, the 392-residue chain is Mitochondrial distribution and morphology protein 10 (392 aa).

The protein belongs to the MDM10 family. As to quaternary structure, component of the ER-mitochondria encounter structure (ERMES) or MDM complex, composed of MMM1, MDM10, MDM12 and MDM34. Associates with the mitochondrial outer membrane sorting assembly machinery SAM(core) complex.

It localises to the mitochondrion outer membrane. In terms of biological role, component of the ERMES/MDM complex, which serves as a molecular tether to connect the endoplasmic reticulum and mitochondria. Components of this complex are involved in the control of mitochondrial shape and protein biogenesis and may function in phospholipid exchange. MDM10 is involved in the late assembly steps of the general translocase of the mitochondrial outer membrane (TOM complex). Functions in the TOM40-specific route of the assembly of outer membrane beta-barrel proteins, including the association of TOM40 with the receptor TOM22 and small TOM proteins. Can associate with the SAM(core) complex as well as the MDM12-MMM1 complex, both involved in late steps of the major beta-barrel assembly pathway, that is responsible for biogenesis of all outer membrane beta-barrel proteins. May act as a switch that shuttles between both complexes and channels precursor proteins into the TOM40-specific pathway. Plays a role in mitochondrial morphology and in the inheritance of mitochondria. This Phaeosphaeria nodorum (strain SN15 / ATCC MYA-4574 / FGSC 10173) (Glume blotch fungus) protein is Mitochondrial distribution and morphology protein 10.